A 162-amino-acid polypeptide reads, in one-letter code: Protein A49 (162 aa).

The protein belongs to the poxviridae A49 protein family.

The sequence is that of Protein A49 from Homo sapiens (Human).